Reading from the N-terminus, the 360-residue chain is SUN domain-containing protein 3 (360 aa).

Polar residues predominate over residues 1–10; the sequence is MSGRPNSRGS. Residues 1-39 form a disordered region; it reads MSGRPNSRGSSRLFRAPSEDASSGSSGSAVLPQEENPNA. The Nuclear segment spans residues 1 to 47; sequence MSGRPNSRGSSRLFRAPSEDASSGSSGSAVLPQEENPNASGLTRSWK. Residues 48–67 traverse the membrane as a helical segment; sequence AVMGMVFILTLLLLGFINHM. Topologically, residues 68–360 are perinuclear space; sequence KLKEKAFPQK…RVHGTPKDDS (293 aa). Residues 103-142 adopt a coiled-coil conformation; that stretch reads KEQLELLKKESQTLENNFREILFLIEQIDVLKALLRDMQD. The SUN domain occupies 196-357; that stretch reads GASVVEAGTS…YRFRVHGTPK (162 aa).

Self-associates. Interacts with SYNE1 and SPAG4/SUN4. Proposed to form a spermatogenesis-specific LINC complex with SYNE1 during sperm head formation possibly implicating a SUN domain-based heterotrimer with SPAG4/SUN4 associating with SYNE1.

It localises to the membrane. It is found in the nucleus envelope. The protein localises to the nucleus inner membrane. As a probable component of the LINC (LInker of Nucleoskeleton and Cytoskeleton) complex, involved in the connection between the nuclear lamina and the cytoskeleton. The nucleocytoplasmic interactions established by the LINC complex play an important role in the transmission of mechanical forces across the nuclear envelope and in nuclear movement and positioning. May be involved in nuclear remodeling during sperm head formation in spermatogenesis. A probable SUN3:SYNE1 LINC complex may tether spermatid nuclei to posterior cytoskeletal structures such as the manchette. This chain is SUN domain-containing protein 3 (SUN3), found in Bos taurus (Bovine).